A 663-amino-acid chain; its full sequence is Methionine--tRNA ligase (663 aa).

The 'HIGH' region signature appears at 13–23; the sequence is PYTNGPCHLGH. Zn(2+)-binding residues include Cys144, Cys147, Cys156, and Cys160. Residues 326 to 330 carry the 'KMSKS' region motif; that stretch reads KFSKS. An ATP-binding site is contributed by Lys329. One can recognise a tRNA-binding domain in the interval 565-663; it reads EFGKMKLIVG…QAVEPGTPIR (99 aa).

This sequence belongs to the class-I aminoacyl-tRNA synthetase family. MetG type 1 subfamily. Homodimer. Zn(2+) serves as cofactor.

The protein resides in the cytoplasm. The enzyme catalyses tRNA(Met) + L-methionine + ATP = L-methionyl-tRNA(Met) + AMP + diphosphate. Is required not only for elongation of protein synthesis but also for the initiation of all mRNA translation through initiator tRNA(fMet) aminoacylation. This chain is Methionine--tRNA ligase, found in Methanosphaerula palustris (strain ATCC BAA-1556 / DSM 19958 / E1-9c).